We begin with the raw amino-acid sequence, 414 residues long: Dothistromin biosynthesis peroxidase dotB (414 aa).

The first 18 residues, 1–18 (MHFFSAIVLTCLASTAVA), serve as a signal peptide directing secretion. A heme-binding site is contributed by Cys72. N-linked (GlcNAc...) asparagine glycosylation is found at Asn187, Asn241, and Asn328.

Belongs to the chloroperoxidase family. It depends on heme b as a cofactor.

It participates in mycotoxin biosynthesis. Functionally, peroxidase; part of the fragmented gene cluster that mediates the biosynthesis of dothistromin (DOTH), a polyketide toxin very similar in structure to the aflatoxin precursor, versicolorin B. The first step of the pathway is the conversion of acetate to norsolorinic acid (NOR) and requires the fatty acid synthase subunits hexA and hexB, as well as the polyketide synthase pksA. PksA combines a hexanoyl starter unit and 7 malonyl-CoA extender units to synthesize the precursor NOR. The hexanoyl starter unit is provided to the acyl-carrier protein (ACP) domain by the fungal fatty acid synthase hexA/hexB. The second step is the conversion of NOR to averantin (AVN) and requires the norsolorinic acid ketoreductase nor1, which catalyzes the dehydration of norsolorinic acid to form (1'S)-averantin. The cytochrome P450 monooxygenase avnA then catalyzes the hydroxylation of AVN to 5'hydroxyaverantin (HAVN). The next step is performed by adhA that transforms HAVN to averufin (AVF). Averufin might then be converted to hydroxyversicolorone by cypX and avfA. Hydroxyversicolorone is further converted versiconal hemiacetal acetate (VHA) by moxY. VHA is then the substrate for the versiconal hemiacetal acetate esterase est1 to yield versiconal (VAL). Versicolorin B synthase vbsA then converts VAL to versicolorin B (VERB) by closing the bisfuran ring. Then, the activity of the versicolorin B desaturase verB leads to versicolorin A (VERA). DotB, a predicted chloroperoxidase, may perform epoxidation of the A-ring of VERA. Alternatively, a cytochrome P450, such as cypX or avnA could catalyze this step. It is also possible that another, uncharacterized, cytochrome P450 enzyme is responsible for this step. Opening of the epoxide could potentially be achieved by the epoxide hydrolase epoA. However, epoA seems not to be required for DOTH biosynthesis, but other epoxide hydrolases may have the ability to complement this hydrolysis. Alternatively, opening of the epoxide ring could be achieved non-enzymatically. The next step is the deoxygenation of ring A to yield the 5,8-dihydroxyanthraquinone which is most likely catalyzed by the NADPH dehydrogenase encoded by ver1. The last stages of DOTH biosynthesis are proposed to involve hydroxylation of the bisfuran. OrdB and norB might have oxidative roles here. An alternative possibility is that cytochrome P450 monoogenases such as avnA and cypX might perform these steps in addition to previously proposed steps. The sequence is that of Dothistromin biosynthesis peroxidase dotB from Dothistroma septosporum (Red band needle blight fungus).